The sequence spans 160 residues: Phosphopantetheine adenylyltransferase (160 aa).

S10 provides a ligand contact to substrate. Residues 10-11 and H18 contribute to the ATP site; that span reads SF. Residues K42, T74, and R88 each contribute to the substrate site. ATP-binding positions include 89-91, E99, and 124-130; these read GLR and YSFISST.

This sequence belongs to the bacterial CoaD family. In terms of assembly, homohexamer. Mg(2+) serves as cofactor.

It is found in the cytoplasm. The enzyme catalyses (R)-4'-phosphopantetheine + ATP + H(+) = 3'-dephospho-CoA + diphosphate. Its pathway is cofactor biosynthesis; coenzyme A biosynthesis; CoA from (R)-pantothenate: step 4/5. Reversibly transfers an adenylyl group from ATP to 4'-phosphopantetheine, yielding dephospho-CoA (dPCoA) and pyrophosphate. The chain is Phosphopantetheine adenylyltransferase from Leptospira borgpetersenii serovar Hardjo-bovis (strain L550).